Reading from the N-terminus, the 433-residue chain is Dihydrolipoyllysine-residue acetyltransferase component of pyruvate dehydrogenase complex (433 aa).

One can recognise a Lipoyl-binding domain in the interval 2-77; sequence AFEFRLPDIG…VVGDVIVKID (76 aa). At lysine 43 the chain carries N6-lipoyllysine. Disordered stretches follow at residues 80–134 and 164–204; these read DAEE…PSVR and YLNG…FPET. Composition is skewed to basic and acidic residues over residues 84–103 and 117–126; these read MQFK…KEQE and EKTEVDESKT. In terms of domain architecture, Peripheral subunit-binding (PSBD) spans 128 to 165; sequence KAMPSVRKYARENGVNIKAVNGSGKNGRITKEDIDAYL. A compositionally biased stretch (low complexity) spans 166–185; the sequence is NGGSSEEGSNTSAASESTSS. Histidine 404 is an active-site residue.

It belongs to the 2-oxoacid dehydrogenase family. In terms of assembly, forms a 24-polypeptide structural core with octahedral symmetry. Requires (R)-lipoate as cofactor.

The catalysed reaction is N(6)-[(R)-dihydrolipoyl]-L-lysyl-[protein] + acetyl-CoA = N(6)-[(R)-S(8)-acetyldihydrolipoyl]-L-lysyl-[protein] + CoA. The pyruvate dehydrogenase complex catalyzes the overall conversion of pyruvate to acetyl-CoA and CO(2). It contains multiple copies of three enzymatic components: pyruvate dehydrogenase (E1), dihydrolipoamide acetyltransferase (E2) and lipoamide dehydrogenase (E3). In Staphylococcus epidermidis (strain ATCC 35984 / DSM 28319 / BCRC 17069 / CCUG 31568 / BM 3577 / RP62A), this protein is Dihydrolipoyllysine-residue acetyltransferase component of pyruvate dehydrogenase complex (pdhC).